Consider the following 215-residue polypeptide: Large ribosomal subunit protein uL4 (215 aa).

The segment at 46–72 is disordered; sequence TAKSKNRAEVSGGGRKPWAQKGGGRAR. Positions 56–71 are enriched in gly residues; it reads SGGGRKPWAQKGGGRA.

The protein belongs to the universal ribosomal protein uL4 family. Part of the 50S ribosomal subunit.

Functionally, one of the primary rRNA binding proteins, this protein initially binds near the 5'-end of the 23S rRNA. It is important during the early stages of 50S assembly. It makes multiple contacts with different domains of the 23S rRNA in the assembled 50S subunit and ribosome. Its function is as follows. Forms part of the polypeptide exit tunnel. The protein is Large ribosomal subunit protein uL4 of Helicobacter pylori (strain J99 / ATCC 700824) (Campylobacter pylori J99).